The chain runs to 96 residues: Co-chaperonin GroES (96 aa).

It belongs to the GroES chaperonin family. As to quaternary structure, heptamer of 7 subunits arranged in a ring. Interacts with the chaperonin GroEL.

The protein resides in the cytoplasm. Its function is as follows. Together with the chaperonin GroEL, plays an essential role in assisting protein folding. The GroEL-GroES system forms a nano-cage that allows encapsulation of the non-native substrate proteins and provides a physical environment optimized to promote and accelerate protein folding. GroES binds to the apical surface of the GroEL ring, thereby capping the opening of the GroEL channel. In Vibrio campbellii (strain ATCC BAA-1116), this protein is Co-chaperonin GroES.